We begin with the raw amino-acid sequence, 1487 residues long: Adhesion G protein-coupled receptor L2 (1487 aa).

An N-terminal signal peptide occupies residues 1 to 25 (MVSSGCRMRSLWFIIIISFSPSTEG). Residues 26–855 (FSRAALPFGL…VHHLLLTVIT (830 aa)) are Extracellular-facing. The region spanning 41-130 (SCEGYSIDLR…KYLEVQYECV (90 aa)) is the SUEL-type lectin domain. Asn-99 is a glycosylation site (N-linked (GlcNAc...) asparagine). The Olfactomedin-like domain maps to 139–398 (VCPGTLKAIV…ILRYSLEFGP (260 aa)). Over residues 423-439 (STTSSASQRGPVSSTAA) the composition is skewed to polar residues. The tract at residues 423-461 (STTSSASQRGPVSSTAAGPQDGSRGTKPPPAVSTTKIPP) is disordered. N-linked (GlcNAc...) asparagine glycosylation is found at Asn-524 and Asn-735. A GAIN-B domain is found at 663 to 841 (TRVSMPTENI…AILMAHREIA (179 aa)). 2 cysteine pairs are disulfide-bonded: Cys-792–Cys-823 and Cys-811–Cys-825. Residues 792–841 (CSFWNYSERTMMGYWSTQGCKLVDTNKTRTTCACSHLTNFAILMAHREIA) are GPS. The interval 829-841 (TNFAILMAHREIA) is stachel. The chain crosses the membrane as a helical span at residues 856-876 (WVGIVVSLVCLAICIFTFCFF). The Cytoplasmic segment spans residues 877–884 (RGLQSDRN). The helical transmembrane segment at 885-905 (TIHKNLCINLFIAEFIFLIGI) threads the bilayer. Residues 906-911 (DKTKYT) lie on the Extracellular side of the membrane. Residues 912–932 (IACPVFAGLLHFFFLAAFSWM) traverse the membrane as a helical segment. Residues 933–955 (CLEGVQLYLMLVEVFESEYSRKK) are Cytoplasmic-facing. Residues 956 to 976 (YYYVAGYLFPATVVGVSAAID) form a helical membrane-spanning segment. The Extracellular portion of the chain corresponds to 977 to 994 (YKSYGTVQACWLHVDNYF). The helical transmembrane segment at 995-1015 (IWSFIGPVTFIILLNIIFLVI) threads the bilayer. Residues 1016-1064 (TLCKMVKHSNTLKPDSSRLENINNYRVCDGYYNTDLPGYEDNKPFIKSW) are Cytoplasmic-facing. The chain crosses the membrane as a helical span at residues 1065 to 1085 (VLGAFALLCLLGLTWSFGLLF). Topologically, residues 1086 to 1090 (VNEET) are extracellular. The chain crosses the membrane as a helical span at residues 1091–1111 (VVMAYLFTAFNAFQGLFIFIF). A disordered region spans residues 1386 to 1430 (EADDHLQSPNRDSLYTSMPNLRDSPYPESSPDMAEDLSPSRRSEN). Residues 1392-1404 (QSPNRDSLYTSMP) are compositionally biased toward polar residues. A phosphoserine mark is found at Ser-1402, Ser-1437, and Ser-1458.

It belongs to the G-protein coupled receptor 2 family. Adhesion G-protein coupled receptor (ADGR) subfamily. As to quaternary structure, heterodimer of 2 chains generated by proteolytic processing; the large extracellular N-terminal fragment and the membrane-bound C-terminal fragment predominantly remain associated and non-covalently linked. Autoproteolytically processed at the GPS region of the GAIN-B domain; this cleavage modulates receptor activity. In terms of tissue distribution, ubiquitously expressed. In neurons, specifically localizes to dendritic domains of CA1 pyramidal neurons in the S. lacunosummoleculare.

It localises to the postsynaptic cell membrane. With respect to regulation, forms a heterodimer of 2 chains generated by proteolytic processing that remain associated through non-covalent interactions mediated by the GAIN-B domain. In the inactivated receptor, the Stachel sequence (also named stalk) is embedded in the GAIN-B domain, where it adopts a beta-strand conformation. On activation, the Stachel moves into the 7 transmembrane region and adopts a twisted hook-shaped configuration that forms contacts within the receptor, leading to coupling of a G-alpha protein, which activates signaling. The cleaved GAIN-B and N-terminal domains can then dissociate from the rest of the receptor. Its function is as follows. Orphan adhesion G-protein coupled receptor (aGPCR), which mediates synapse specificity. Ligand binding causes a conformation change that triggers signaling via guanine nucleotide-binding proteins (G proteins) and modulates the activity of downstream effectors. Following G-protein coupled receptor activation, associates with cell adhesion molecules that are expressed at the surface of adjacent cells to direct synapse specificity. Specifically mediates the establishment of perforant-path synapses on CA1-region pyramidal neurons in the hippocampus. Localizes to postsynaptic spines in excitatory synapses in the S.lacunosum-moleculare and interacts with presynaptic cell adhesion molecules, such as teneurins, promoting synapse formation. This chain is Adhesion G protein-coupled receptor L2, found in Mus musculus (Mouse).